The following is a 512-amino-acid chain: Rab11 family-interacting protein 2 (512 aa).

One can recognise a C2 domain in the interval 1 to 120 (MMLSEQAQKW…DKQRRKTEWF (120 aa)). Residues 15-102 (VQVTVLQAKD…GLDKFLGQVA (88 aa)) are necessary for its cellular translocation to the plasma membrane. Disordered stretches follow at residues 174–231 (RKSD…MSDL) and 263–287 (PESGSLKSPHRRTLSFDTSKLNQPG). 2 stretches are compositionally biased toward polar residues: residues 221–231 (RLSSAHSMSDL) and 277–287 (SFDTSKLNQPG). Serine 227 is modified (phosphoserine; by MARK2). Serine 277 bears the Phosphoserine mark. Residues 323–325 (NPF) carry the NPF 1 motif. Residues 347–374 (KESKREKREKVSLFERVTGKRDSRRPDK) show a composition bias toward basic and acidic residues. The tract at residues 347–390 (KESKREKREKVSLFERVTGKRDSRRPDKLNNGGSDSPCDLKSPS) is disordered. 2 short sequence motifs (NPF) span residues 406-408 (NPF) and 440-442 (NPF). The region spanning 437 to 499 (PDNNPFDATA…EETPSILRVP (63 aa)) is the FIP-RBD domain. The segment at 465–512 (ELLRRKDTHIRELEDYIDNLLVRVMEETPSILRVPYEPSRKAGKFTNS) is necessary for interaction with AP2A1, RAB11A, subcellular location, endocytosis activity and homooligomerization.

Homooligomerizes in a Rab11-independent manner. Forms a heterooligomeric complex with RAB11FIP4. Interacts with AP2A1, MYO5B, RAB25 and REPS1. Interacts with RAB11A and RAB11B (activated GTP-bound form). Interacts with NPC1L1. Interacts (via NPF motifs) with EHD1 and EHD3. Interacts with TICAM2; this interaction directs RAB11FIP2 to the phagosome. Interacts with RAB14 and RAB25 (GTP-bound forms). Post-translationally, phosphorylation at Ser-227 by MARK2 regulates epithelial cell polarity.

It is found in the cell membrane. It localises to the recycling endosome membrane. In terms of biological role, a Rab11 effector binding preferentially phosphatidylinositol 3,4,5-trisphosphate (PtdInsP3) and phosphatidic acid (PA) and acting in the regulation of the transport of vesicles from the endosomal recycling compartment (ERC) to the plasma membrane. Involved in insulin granule exocytosis. Also involved in receptor-mediated endocytosis and membrane trafficking of recycling endosomes, probably originating from clathrin-coated vesicles. Required in a complex with MYO5B and RAB11 for the transport of NPC1L1 to the plasma membrane. Also acts as a regulator of cell polarity. Plays an essential role in phagocytosis through a mechanism involving TICAM2, RAC1 and CDC42 Rho GTPases for controlling actin-dynamics. In Mus musculus (Mouse), this protein is Rab11 family-interacting protein 2 (Rab11fip2).